A 600-amino-acid polypeptide reads, in one-letter code: Elongation factor 4 (600 aa).

The region spanning 5 to 187 (KYIRNFSIVA…EIVEKIPAPE (183 aa)) is the tr-type G domain. Residues 17-22 (DHGKST) and 134-137 (NKVD) each bind GTP.

It belongs to the TRAFAC class translation factor GTPase superfamily. Classic translation factor GTPase family. LepA subfamily.

It is found in the cell membrane. The catalysed reaction is GTP + H2O = GDP + phosphate + H(+). In terms of biological role, required for accurate and efficient protein synthesis under certain stress conditions. May act as a fidelity factor of the translation reaction, by catalyzing a one-codon backward translocation of tRNAs on improperly translocated ribosomes. Back-translocation proceeds from a post-translocation (POST) complex to a pre-translocation (PRE) complex, thus giving elongation factor G a second chance to translocate the tRNAs correctly. Binds to ribosomes in a GTP-dependent manner. This Clostridium perfringens (strain 13 / Type A) protein is Elongation factor 4.